The chain runs to 273 residues: Probable branched-chain-amino-acid aminotransferase (273 aa).

Lys-133 carries the post-translational modification N6-(pyridoxal phosphate)lysine.

The protein belongs to the class-IV pyridoxal-phosphate-dependent aminotransferase family. Requires pyridoxal 5'-phosphate as cofactor.

It carries out the reaction L-leucine + 2-oxoglutarate = 4-methyl-2-oxopentanoate + L-glutamate. The enzyme catalyses L-isoleucine + 2-oxoglutarate = (S)-3-methyl-2-oxopentanoate + L-glutamate. The catalysed reaction is L-valine + 2-oxoglutarate = 3-methyl-2-oxobutanoate + L-glutamate. It participates in amino-acid biosynthesis; L-isoleucine biosynthesis; L-isoleucine from 2-oxobutanoate: step 4/4. It functions in the pathway amino-acid biosynthesis; L-leucine biosynthesis; L-leucine from 3-methyl-2-oxobutanoate: step 4/4. The protein operates within amino-acid biosynthesis; L-valine biosynthesis; L-valine from pyruvate: step 4/4. Functionally, acts on leucine, isoleucine and valine. The polypeptide is Probable branched-chain-amino-acid aminotransferase (ilvE) (Thermotoga maritima (strain ATCC 43589 / DSM 3109 / JCM 10099 / NBRC 100826 / MSB8)).